The sequence spans 562 residues: Beta-hexosaminidase (562 aa).

The N-terminal stretch at 1–22 (MVLDKMIIFHLLLWLCNVVVHA) is a signal peptide. N-linked (GlcNAc...) asparagine glycans are attached at residues asparagine 38, asparagine 52, asparagine 111, asparagine 337, asparagine 382, asparagine 396, and asparagine 463.

The protein belongs to the glycosyl hydrolase 20 family.

It carries out the reaction Hydrolysis of terminal non-reducing N-acetyl-D-hexosamine residues in N-acetyl-beta-D-hexosaminides.. Functionally, has a broad substrate specificity. This chain is Beta-hexosaminidase (HEX1), found in Candida albicans (Yeast).